The sequence spans 317 residues: Putative 2-hydroxyacid dehydrogenase SAOUHSC_02577 (317 aa).

Residues 155 to 156 (EI), 234 to 236 (ASR), and aspartate 260 each bind NAD(+). Arginine 236 is a catalytic residue. The active site involves glutamate 265. Residue histidine 283 is the Proton donor of the active site. 283-286 (HIGN) contacts NAD(+).

This sequence belongs to the D-isomer specific 2-hydroxyacid dehydrogenase family.

The protein is Putative 2-hydroxyacid dehydrogenase SAOUHSC_02577 of Staphylococcus aureus (strain NCTC 8325 / PS 47).